A 103-amino-acid chain; its full sequence is Histone H4 (103 aa).

Gly residues predominate over residues methionine 1–glycine 14. The interval methionine 1–arginine 20 is disordered. Residues lysine 6 and lysine 13 each carry the N6-acetyl-N6-methyllysine; alternate modification. A DNA-binding region spans residues lysine 17–lysine 21.

Belongs to the histone H4 family. In terms of assembly, the nucleosome is a histone octamer containing two molecules each of H2A, H2B, H3 and H4 assembled in one H3-H4 heterotetramer and two H2A-H2B heterodimers. The octamer wraps approximately 147 bp of DNA.

Its subcellular location is the nucleus. It localises to the chromosome. Functionally, core component of nucleosome. Nucleosomes wrap and compact DNA into chromatin, limiting DNA accessibility to the cellular machineries which require DNA as a template. Histones thereby play a central role in transcription regulation, DNA repair, DNA replication and chromosomal stability. DNA accessibility is regulated via a complex set of post-translational modifications of histones, also called histone code, and nucleosome remodeling. The protein is Histone H4 of Diadromus pulchellus (Parasitic wasp).